A 189-amino-acid polypeptide reads, in one-letter code: Glucose-6-phosphate isomerase (189 aa).

The Fe cation site is built by His-88, His-90, Glu-97, and His-136.

Belongs to the archaeal-type GPI family. As to quaternary structure, homodimer.

Its subcellular location is the cytoplasm. The enzyme catalyses alpha-D-glucose 6-phosphate = beta-D-fructose 6-phosphate. It participates in carbohydrate degradation; glycolysis; D-glyceraldehyde 3-phosphate and glycerone phosphate from D-glucose: step 2/4. This Thermococcus onnurineus (strain NA1) protein is Glucose-6-phosphate isomerase.